An 84-amino-acid chain; its full sequence is UPF0410 protein YmgE (84 aa).

Transmembrane regions (helical) follow at residues 1–21 (MGIIAWIIFGLIAGIIAKLIM), 27–47 (GGFFLTCILGIVGAVVGGWLA), and 58–78 (GFNLHSFLVAVVGAILVLGVF).

This sequence belongs to the UPF0410 family.

It localises to the cell inner membrane. The chain is UPF0410 protein YmgE (ymgE) from Escherichia coli O127:H6 (strain E2348/69 / EPEC).